Reading from the N-terminus, the 553-residue chain is Glutamate--tRNA ligase (553 aa).

The short motif at 103–113 is the 'HIGH' region element; that stretch reads PNPSGPLHIGH.

It belongs to the class-I aminoacyl-tRNA synthetase family. Glutamate--tRNA ligase type 2 subfamily.

The protein resides in the cytoplasm. The catalysed reaction is tRNA(Glu) + L-glutamate + ATP = L-glutamyl-tRNA(Glu) + AMP + diphosphate. In terms of biological role, catalyzes the attachment of glutamate to tRNA(Glu) in a two-step reaction: glutamate is first activated by ATP to form Glu-AMP and then transferred to the acceptor end of tRNA(Glu). This is Glutamate--tRNA ligase from Methanothermobacter thermautotrophicus (strain ATCC 29096 / DSM 1053 / JCM 10044 / NBRC 100330 / Delta H) (Methanobacterium thermoautotrophicum).